Reading from the N-terminus, the 843-residue chain is Major vault protein alpha (843 aa).

At Ala-2 the chain carries N-acetylalanine. MVP repeat units lie at residues Ala-2–Arg-56, Asn-57–Ala-111, Leu-112–Lys-163, Ala-164–Asn-216, Ala-217–His-272, Ile-273–Ile-324, Tyr-325–Ser-376, Ile-377–Val-442, and Val-443–Pro-505. The tract at residues Gln-643–Glu-663 is disordered. Positions Ala-646–Glu-663 are enriched in basic and acidic residues.

In terms of assembly, the vault ribonucleoprotein particle is a huge (400 A x 670 A) cage structure of 12.9 MDa. It consists of a dimer of half-vaults, with each half-vault comprising 39 identical major vault protein (MVP) chains. Dictyostelium is one of the few organisms in which the major component is actually two proteins (alpha and beta).

The protein localises to the cytoplasm. It localises to the nucleus. Functionally, unknown, though MVP-alpha is required for normal vault structure. This is Major vault protein alpha (mvpA) from Dictyostelium discoideum (Social amoeba).